A 141-amino-acid polypeptide reads, in one-letter code: uncharacterized protein (141 aa).

Helical transmembrane passes span 7 to 27 (VAIM…AASL), 47 to 67 (SAVG…MLGV), 75 to 95 (AVLC…ILMF), and 106 to 126 (VIFV…WFVA).

Its subcellular location is the cell membrane. This is an uncharacterized protein from Bacillus subtilis (strain 168).